Reading from the N-terminus, the 1137-residue chain is Calcium-activated potassium channel subunit alpha-1 (1137 aa).

Topologically, residues 1–44 (MSNNINANNLNTDSSSSPVNVPKMDALIIPVTMEVPCDSRGQRM) are extracellular. Residues 45-65 (WWAFLASSMVTFFGGLFIILL) form a helical membrane-spanning segment. The Cytoplasmic portion of the chain corresponds to 66-137 (WRTLKYLWTV…MISAQTLTGR (72 aa)). The helical transmembrane segment at 138-158 (VLVVLVFALSIGALVIYFIDS) threads the bilayer. At 159–173 (SNPIESCQNFYKDFT) the chain is on the extracellular side. Residues 174 to 194 (LQIDMAFNVFFLLYFGLRFIA) traverse the membrane as a helical segment. Over 195-198 (ANDK) the chain is Cytoplasmic. Residues 199-219 (LWFWLEVNSVVDFFTVPPVFV) traverse the membrane as a helical segment. Topologically, residues 220 to 223 (SVYL) are extracellular. Residues 224 to 244 (NRSWLGLRFLRALRLIQFSEI) traverse the membrane as a helical; Voltage-sensor segment. Topologically, residues 245-259 (LQFLNILKTSNSIKL) are cytoplasmic. The helical transmembrane segment at 260–280 (VNLCSIFISTWLTAAGFIHLV) threads the bilayer. Over 281 to 294 (ENSGDPWENFQNNQ) the chain is Extracellular. The pore-forming intramembrane region spans 295 to 317 (QLTYWECVYLLMVTMSTVGYGDV). Positions 311 to 314 (TVGY) match the Selectivity for potassium motif. The Extracellular portion of the chain corresponds to 318–326 (YAKTTLGRL). A helical transmembrane segment spans residues 327–347 (FMVFFILGGLAMFASYVPEII). At 348 to 1137 (ELIGNRKKYG…KQKYVQEDRL (790 aa)) the chain is on the cytoplasmic side. An RCK N-terminal 1 domain is found at 366–508 (RKHIVVCGHI…WNWKEGDDAI (143 aa)). Residues Glu-398, Gln-421, and Glu-423 each coordinate Mg(2+). The segment S7 stretch occupies residues 515-535 (LGFIAQSCLAPGLSTMLANLF). The segment at 572 to 592 (LSFPAVCELVFAKLKLLMIAI) is segment S8. A heme-binding motif region spans residues 636–640 (CKACH). A disordered region spans residues 660 to 688 (EQPSTLSPKKKQRNGGMRNSPNSSPKLMR). The tract at residues 738–758 (VLSGHVVVCIFGDVKSALIGL) is segment S9. One can recognise an RCK N-terminal 2 domain in the interval 740 to 884 (SGHVVVCIFG…MDRSSPDNSP (145 aa)). The Calcium bowl signature appears at 904–926 (TELVNDSNVQFLDQDDDDDPDTE). Residues Gln-913, Asp-916, Asp-919, and Asp-921 each coordinate Ca(2+). The segment at 933 to 953 (FACGTAFAVSVLDSLMSATYF) is segment S10. Positions 1088–1112 (ASLSHSSHSSYSSSKKSSSVHSIPS) are enriched in low complexity. The segment at 1088–1137 (ASLSHSSHSSYSSSKKSSSVHSIPSTANRPNRTKTRDSREKQKYVQEDRL) is disordered. The segment covering 1121-1137 (KTRDSREKQKYVQEDRL) has biased composition (basic and acidic residues).

The protein belongs to the potassium channel family. Calcium-activated (TC 1.A.1.3) subfamily. KCa1.1/KCNMA1 sub-subfamily. As to quaternary structure, homotetramer; which constitutes the calcium-activated potassium channel.

Its subcellular location is the cell membrane. It carries out the reaction K(+)(in) = K(+)(out). With respect to regulation, ethanol and carbon monoxide-bound heme increase channel activation. Heme inhibits channel activation. Potassium channel activated by both membrane depolarization or increase in cytosolic Ca(2+) that mediates export of K(+). It is also activated by the concentration of cytosolic Mg(2+). Its activation dampens the excitatory events that elevate the cytosolic Ca(2+) concentration and/or depolarize the cell membrane. It therefore contributes to repolarization of the membrane potential. Plays a key role in controlling excitability in a number of systems, such as regulation of the contraction of smooth muscle, the tuning of hair cells in the cochlea, regulation of transmitter release, and innate immunity. In smooth muscles, its activation by high level of Ca(2+), caused by ryanodine receptors in the sarcoplasmic reticulum, regulates the membrane potential. In cochlea cells, its number and kinetic properties partly determine the characteristic frequency of each hair cell and thereby helps to establish a tonotopic map. Highly sensitive to both iberiotoxin (IbTx) and charybdotoxin (CTX). This Gallus gallus (Chicken) protein is Calcium-activated potassium channel subunit alpha-1 (KCNMA1).